Consider the following 257-residue polypeptide: Imidazole glycerol phosphate synthase subunit HisF (257 aa).

Active-site residues include Asp11 and Asp130.

It belongs to the HisA/HisF family. Heterodimer of HisH and HisF.

It is found in the cytoplasm. It carries out the reaction 5-[(5-phospho-1-deoxy-D-ribulos-1-ylimino)methylamino]-1-(5-phospho-beta-D-ribosyl)imidazole-4-carboxamide + L-glutamine = D-erythro-1-(imidazol-4-yl)glycerol 3-phosphate + 5-amino-1-(5-phospho-beta-D-ribosyl)imidazole-4-carboxamide + L-glutamate + H(+). Its pathway is amino-acid biosynthesis; L-histidine biosynthesis; L-histidine from 5-phospho-alpha-D-ribose 1-diphosphate: step 5/9. Its function is as follows. IGPS catalyzes the conversion of PRFAR and glutamine to IGP, AICAR and glutamate. The HisF subunit catalyzes the cyclization activity that produces IGP and AICAR from PRFAR using the ammonia provided by the HisH subunit. The sequence is that of Imidazole glycerol phosphate synthase subunit HisF from Pseudoalteromonas translucida (strain TAC 125).